Here is a 3411-residue protein sequence, read N- to C-terminus: Genome polyprotein (3411 aa).

The Cytoplasmic segment spans residues 1-104; it reads MSGRKAQGKT…LSSRKRRSHD (104 aa). Residues 102–121 constitute a propeptide, ER anchor for the capsid protein C, removed in mature form by serine protease NS3; that stretch reads SHDALAVQFLILGMLLMAGG. A helical membrane pass occupies residues 105-125; that stretch reads ALAVQFLILGMLLMAGGVTLV. At 126 to 244 the chain is on the extracellular side; that stretch reads RKNRWLLLNV…GERQLQKIER (119 aa). Residues N134 and N150 are each glycosylated (N-linked (GlcNAc...) asparagine; by host). The helical transmembrane segment at 245–265 threads the bilayer; that stretch reads WLVRNPFFAVTALTIAYLVGS. At 266-270 the chain is on the cytoplasmic side; that stretch reads NMTQR. A helical membrane pass occupies residues 271 to 285; it reads VVIALLVLAVGPAYS. Residues 286–730 lie on the Extracellular side of the membrane; that stretch reads AHCIGITDRD…TVFGSAFQGL (445 aa). Intrachain disulfides connect C288–C315, C345–C401, C345–C406, C359–C390, C377–C401, C377–C406, C467–C568, and C585–C615. The tract at residues 383–396 is fusion peptide; sequence DRGWGNGCGLFGKG. A helical transmembrane segment spans residues 731–751; it reads FGGLSWITKVIMGAVLIWVGI. Residues 752–757 lie on the Extracellular side of the membrane; the sequence is NTRNMT. The helical transmembrane segment at 758–778 threads the bilayer; it reads MSMSMILVGVIMMFLSLGVGA. The Extracellular segment spans residues 779 to 1132; sequence DQGCAINFGK…LVRSWVTAGE (354 aa). Disulfide bonds link C782–C793, C833–C921, C957–C1002, C1058–C1107, C1069–C1091, and C1090–C1094. Residues N908 and N986 are each glycosylated (N-linked (GlcNAc...) asparagine; by host). A helical transmembrane segment spans residues 1133–1153; the sequence is IHAVPFGLVSMMIAMEVVLRK. The Cytoplasmic segment spans residues 1154-1201; sequence RQGPKQMLVGGVVLLGAMLVGQVTLLDLLKLTVAVGLHFHEMNNGGDA. A helical membrane pass occupies residues 1202-1222; sequence MYMALIAAFSIRPGLLIGFGL. Residues 1223-1287 are Lumenal-facing; sequence RTLWSPRERL…ILPLMALLTP (65 aa). A helical membrane pass occupies residues 1288-1308; that stretch reads VTMAEVRLAAMLFCTVVIIGV. The Cytoplasmic segment spans residues 1309-1355; that stretch reads LHQNSKDTSMQKTIPLVALTLTSYLGLTQPFLGLCAFLATRLFGRRS. Residues 1356 to 1376 form a helical membrane-spanning segment; that stretch reads IPVNEALAAAGLVGVLAGLAF. The Lumenal segment spans residues 1377 to 1378; that stretch reads QE. The chain crosses the membrane as a helical span at residues 1379-1399; the sequence is MENFLGPIAVGGILMMLVSVA. Over 1400 to 1456 the chain is Cytoplasmic; the sequence is GRVDGLELRKLGEVSWEEEAEISGSSARYDVALSEQGEFKLLSEEKVPWDQVVMTSL. The interval 1407 to 1446 is interacts with and activates NS3 protease; sequence LRKLGEVSWEEEAEISGSSARYDVALSEQGEFKLLSEEKV. The segment at residues 1457 to 1477 is an intramembrane region (helical); the sequence is ALVGAAIHPFALLLVLAGWLF. Over 1478 to 2157 the chain is Cytoplasmic; sequence HVKGARRSGD…RNALSMMPEA (680 aa). One can recognise a Peptidase S7 domain in the interval 1485–1665; it reads SGDVLWDIPT…EVKEEGKEEL (181 aa). Catalysis depends on charge relay system; for serine protease NS3 activity residues H1537, D1561, and S1622. Residues 1669–1825 enclose the Helicase ATP-binding domain; it reads PTMLKKGMTT…HSNGEIEDVQ (157 aa). Positions 1673–1676 are important for RNA-binding; the sequence is KKGM. 1682-1689 contacts ATP; sequence FHPGAGKT. Positions 1773–1776 match the DEAH box motif; it reads DEAH. In terms of domain architecture, Helicase C-terminal spans 1820–1997; it reads EIEDVQTDIP…VRGGMVAPLY (178 aa). K1877 is modified (N6-acetyllysine; by host). Positions 1942 to 1961 are disordered; sequence AAQRRGRIGRNPNRDGDSYY. The chain crosses the membrane as a helical span at residues 2158–2178; that stretch reads MTIAMLFILAGLLTSGMVIFF. Residues 2179-2186 are Lumenal-facing; that stretch reads MSPKGISR. The segment at residues 2187–2207 is an intramembrane region (helical); the sequence is MSMAMGTMAGCGYLMFLGGVK. Over 2208 to 2209 the chain is Lumenal; that stretch reads PT. The chain crosses the membrane as a helical span at residues 2210–2230; that stretch reads HISYIMLIFFVLMVVVIPEPG. The Cytoplasmic portion of the chain corresponds to 2231–2241; the sequence is QQRSIQDNQVA. Residues 2242–2262 form a helical membrane-spanning segment; the sequence is YLIIGILTLVSVVAANELGML. The Lumenal segment spans residues 2263–2293; sequence EKTKEDLFGKKDLIPSSASPWSWPDLDLKPG. The helical intramembrane region spans 2294–2314; sequence AAWTVYVGIVTMLSPMLHHWI. Over 2315-2360 the chain is Lumenal; the sequence is KVEYGNLSLSGIAQSASVLSFMDKGIPFMKMNISVIILLVSGWNSI. A helical membrane pass occupies residues 2361-2380; that stretch reads TVMPLLCGIGCAMLHWSLIL. Topologically, residues 2381–2421 are cytoplasmic; the sequence is PGIKAQQSKLAQRRVFHGVAKNPVVDGNPTVDIEEAPEMPA. Residues 2422–2442 form a helical membrane-spanning segment; sequence LYEKKLALYLLLALSLASVAM. Residues 2443 to 2445 are Lumenal-facing; it reads CRT. A helical transmembrane segment spans residues 2446-2466; sequence PFSLAEGIVLASAALGPLIEG. At 2467 to 3411 the chain is on the cytoplasmic side; that stretch reads NTSLLWNGPM…DADLQPGELI (945 aa). The mRNA cap 0-1 NS5-type MT domain occupies 2507–2771; it reads GRANGKTLGE…DVILPIGTRS (265 aa). S2562 serves as a coordination point for S-adenosyl-L-methionine. At S2562 the chain carries Phosphoserine. The For 2'-O-MTase activity role is filled by K2567. S-adenosyl-L-methionine contacts are provided by G2592, W2593, T2610, L2611, D2637, and I2638. Residue D2652 is the For 2'-O-MTase activity of the active site. I2653 contributes to the S-adenosyl-L-methionine binding site. Residues K2688 and E2724 each act as for 2'-O-MTase activity in the active site. An S-adenosyl-L-methionine-binding site is contributed by Y2726. The Nuclear localization signal signature appears at 2878–2911; sequence RKIMKVVNRWLFRHLAREKNPRLCTKEEFIAKVR. 4 residues coordinate Zn(2+): E2945, H2949, C2954, and C2957. The 153-residue stretch at 3035-3187 folds into the RdRp catalytic domain; sequence GGFYADDTAG…RPIDDRFGLA (153 aa). The Zn(2+) site is built by H3222, C3238, and C3357.

In the N-terminal section; belongs to the class I-like SAM-binding methyltransferase superfamily. mRNA cap 0-1 NS5-type methyltransferase family. Homodimer. Interacts (via N-terminus) with host EXOC1 (via C-terminus); this interaction results in EXOC1 degradation through the proteasome degradation pathway. In terms of assembly, forms heterodimers with envelope protein E in the endoplasmic reticulum and Golgi. As to quaternary structure, homodimer; in the endoplasmic reticulum and Golgi. Interacts with protein prM. Interacts with non-structural protein 1. Homodimer; Homohexamer when secreted. Interacts with envelope protein E. In terms of assembly, interacts (via N-terminus) with serine protease NS3. As to quaternary structure, forms a heterodimer with serine protease NS3. May form homooligomers. Forms a heterodimer with NS2B. Interacts with non-structural protein 2A (via N-terminus). Interacts with NS4B. Interacts with unphosphorylated RNA-directed RNA polymerase NS5; this interaction stimulates RNA-directed RNA polymerase NS5 guanylyltransferase activity. NS3 interacts with host PDCD6IP; this interaction contributes to virion release. In terms of assembly, interacts with serine protease NS3. As to quaternary structure, homodimer. Interacts with host STAT2; this interaction prevents the establishment of cellular antiviral state. Interacts with serine protease NS3. Interacts with host TRIM23; this interaction leads to NS5 ubiquitination. Post-translationally, specific enzymatic cleavages in vivo yield mature proteins. The nascent capsid protein C contains a C-terminal hydrophobic domain that act as a signal sequence for translocation of prM into the lumen of the ER. Mature capsid protein C is cleaved at a site upstream of this hydrophobic domain by NS3. prM is cleaved in post-Golgi vesicles by a host furin, releasing the mature small envelope protein M, and peptide pr. Non-structural protein 2A-alpha, a C-terminally truncated form of non-structural protein 2A, results from partial cleavage by NS3. Specific enzymatic cleavages in vivo yield mature proteins peptide 2K acts as a signal sequence and is removed from the N-terminus of NS4B by the host signal peptidase in the ER lumen. Signal cleavage at the 2K-4B site requires a prior NS3 protease-mediated cleavage at the 4A-2K site. In terms of processing, cleaved in post-Golgi vesicles by a host furin, releasing the mature small envelope protein M, and peptide pr. This cleavage is incomplete as up to 30% of viral particles still carry uncleaved prM. N-glycosylated. Post-translationally, N-glycosylated. The excreted form is glycosylated and this is required for efficient secretion of the protein from infected cells. In terms of processing, polyubiquitinated; ubiquitination is probably mediated by host TRIM23 and is prerequisite for NS5-STAT2 interaction. NS5 is not ISGylated or sumoylated. Acetylated by host KAT5. Acetylation modulates NS3 RNA-binding and unwinding activities and plays an important positive role for viral replication. Post-translationally, phosphorylated on serines residues. This phosphorylation may trigger NS5 nuclear localization.

Its subcellular location is the virion. It is found in the host nucleus. It localises to the host cytoplasm. The protein localises to the host perinuclear region. The protein resides in the secreted. Its subcellular location is the virion membrane. It is found in the host endoplasmic reticulum membrane. The catalysed reaction is Selective hydrolysis of -Xaa-Xaa-|-Yaa- bonds in which each of the Xaa can be either Arg or Lys and Yaa can be either Ser or Ala.. It catalyses the reaction RNA(n) + a ribonucleoside 5'-triphosphate = RNA(n+1) + diphosphate. It carries out the reaction a ribonucleoside 5'-triphosphate + H2O = a ribonucleoside 5'-diphosphate + phosphate + H(+). The enzyme catalyses ATP + H2O = ADP + phosphate + H(+). The catalysed reaction is a 5'-end (5'-triphosphoguanosine)-ribonucleoside in mRNA + S-adenosyl-L-methionine = a 5'-end (N(7)-methyl 5'-triphosphoguanosine)-ribonucleoside in mRNA + S-adenosyl-L-homocysteine. It catalyses the reaction a 5'-end (N(7)-methyl 5'-triphosphoguanosine)-ribonucleoside in mRNA + S-adenosyl-L-methionine = a 5'-end (N(7)-methyl 5'-triphosphoguanosine)-(2'-O-methyl-ribonucleoside) in mRNA + S-adenosyl-L-homocysteine + H(+). Functionally, plays a role in virus budding by binding to the cell membrane and gathering the viral RNA into a nucleocapsid that forms the core of a mature virus particle. During virus entry, may induce genome penetration into the host cytoplasm after hemifusion induced by the surface proteins. Can migrate to the cell nucleus where it modulates host functions. Inhibits RNA silencing by interfering with host Dicer. In terms of biological role, prevents premature fusion activity of envelope proteins in trans-Golgi by binding to envelope protein E at pH6.0. After virion release in extracellular space, gets dissociated from E dimers. Its function is as follows. Acts as a chaperone for envelope protein E during intracellular virion assembly by masking and inactivating envelope protein E fusion peptide. prM is the only viral peptide matured by host furin in the trans-Golgi network probably to avoid catastrophic activation of the viral fusion activity in acidic Golgi compartment prior to virion release. prM-E cleavage is inefficient, and many virions are only partially matured. These uncleaved prM would play a role in immune evasion. Functionally, may play a role in virus budding. Exerts cytotoxic effects by activating a mitochondrial apoptotic pathway through M ectodomain. May display a viroporin activity. Binds to host cell surface receptor and mediates fusion between viral and cellular membranes. Envelope protein is synthesized in the endoplasmic reticulum in the form of heterodimer with protein prM. They play a role in virion budding in the ER, and the newly formed immature particle is covered with 60 spikes composed of heterodimer between precursor prM and envelope protein E. The virion is transported to the Golgi apparatus where the low pH causes dissociation of PrM-E heterodimers and formation of E homodimers. prM-E cleavage is inefficient, and many virions are only partially matured. These uncleaved prM would play a role in immune evasion. In terms of biological role, involved in immune evasion, pathogenesis and viral replication. Once cleaved off the polyprotein, is targeted to three destinations: the viral replication cycle, the plasma membrane and the extracellular compartment. Essential for viral replication. Required for formation of the replication complex and recruitment of other non-structural proteins to the ER-derived membrane structures. Excreted as a hexameric lipoparticle that plays a role against host immune response. Antagonizing the complement function. Binds to the host macrophages and dendritic cells. Inhibits signal transduction originating from Toll-like receptor 3 (TLR3). Its function is as follows. Component of the viral RNA replication complex that functions in virion assembly and antagonizes the host immune response. Functionally, required cofactor for the serine protease function of NS3. May have membrane-destabilizing activity and form viroporins. Displays three enzymatic activities: serine protease, NTPase and RNA helicase. NS3 serine protease, in association with NS2B, performs its autocleavage and cleaves the polyprotein at dibasic sites in the cytoplasm: C-prM, NS2A-NS2B, NS2B-NS3, NS3-NS4A, NS4A-2K and NS4B-NS5. NS3 RNA helicase binds RNA and unwinds dsRNA in the 3' to 5' direction. Also plays a role in virus assembly. In terms of biological role, regulates the ATPase activity of the NS3 helicase activity. NS4A allows NS3 helicase to conserve energy during unwinding. Its function is as follows. Functions as a signal peptide for NS4B and is required for the interferon antagonism activity of the latter. Functionally, induces the formation of ER-derived membrane vesicles where the viral replication takes place. Inhibits interferon (IFN)-induced host STAT1 phosphorylation and nuclear translocation, thereby preventing the establishment of cellular antiviral state by blocking the IFN-alpha/beta pathway. Replicates the viral (+) and (-) RNA genome, and performs the capping of genomes in the cytoplasm. NS5 methylates viral RNA cap at guanine N-7 and ribose 2'-O positions. Besides its role in RNA genome replication, also prevents the establishment of cellular antiviral state by blocking the interferon-alpha/beta (IFN-alpha/beta) signaling pathway. IFN-I induces binding of NS5 to host IFN-activated transcription factor STAT2, preventing its transcriptional activity. Host TRIM23 is the E3 ligase that interacts with and polyubiquitinates NS5 to promote its binding to STAT2 and trigger IFN-I signaling inhibition. The protein is Genome polyprotein of Yellow fever virus (isolate Ivory Coast/1999) (YFV).